The sequence spans 132 residues: Phosphoribosyl-AMP cyclohydrolase (132 aa).

Asp-76 serves as a coordination point for Mg(2+). Cys-77 serves as a coordination point for Zn(2+). Residues Asp-78 and Asp-80 each contribute to the Mg(2+) site. Positions 93 and 100 each coordinate Zn(2+).

This sequence belongs to the PRA-CH family. As to quaternary structure, homodimer. The cofactor is Mg(2+). It depends on Zn(2+) as a cofactor.

It localises to the cytoplasm. The enzyme catalyses 1-(5-phospho-beta-D-ribosyl)-5'-AMP + H2O = 1-(5-phospho-beta-D-ribosyl)-5-[(5-phospho-beta-D-ribosylamino)methylideneamino]imidazole-4-carboxamide. It functions in the pathway amino-acid biosynthesis; L-histidine biosynthesis; L-histidine from 5-phospho-alpha-D-ribose 1-diphosphate: step 3/9. In terms of biological role, catalyzes the hydrolysis of the adenine ring of phosphoribosyl-AMP. This is Phosphoribosyl-AMP cyclohydrolase from Methanobrevibacter smithii (strain ATCC 35061 / DSM 861 / OCM 144 / PS).